The primary structure comprises 115 residues: Transcription and mRNA export factor ENY2 (115 aa).

The protein belongs to the ENY2 family. Component of a deubiquitination module (DUB module) formed by ENY2, SGF11, and UBP22 in Arabidopsis. Interacts directly with SGF11, but not with UBP22. Interacts with MOS4. In terms of tissue distribution, expressed in roots, cotyledons, leaves and upper part of sepals.

It is found in the nucleus. Its subcellular location is the nucleoplasm. In terms of biological role, component of a deubiquitination module (DUB module) that specifically deubiquinates monoubiquinated histone H2B (H2Bub). Does not seem to be a component of the TREX-2 complex. Seems to act independently of the SAGA multiprotein complex. The DUB module is responsible for the major H2Bub deubiquitinase activity in Arabidopsis. The sequence is that of Transcription and mRNA export factor ENY2 from Arabidopsis thaliana (Mouse-ear cress).